Consider the following 1484-residue polypeptide: Chromosome partition protein MukB (1484 aa).

34-41 (GGNGAGKS) provides a ligand contact to ATP. Coiled coils occupy residues 338–415 (NLVQ…RAIQ), 496–604 (QTAR…ALAW), 781–805 (AARE…ATLS), 835–868 (EAEM…HYDQ), 903–1115 (HDAQ…SAKA), and 1206–1265 (DDPV…LQAV). A flexible hinge region spans residues 666 to 783 (PGGTDDARLT…AVPLFGRAAR (118 aa)).

It belongs to the SMC family. MukB subfamily. As to quaternary structure, homodimerization via its hinge domain. Binds to DNA via its C-terminal region. Interacts, and probably forms a ternary complex, with MukE and MukF via its C-terminal region. The complex formation is stimulated by calcium or magnesium. Interacts with tubulin-related protein FtsZ.

It is found in the cytoplasm. The protein localises to the nucleoid. In terms of biological role, plays a central role in chromosome condensation, segregation and cell cycle progression. Functions as a homodimer, which is essential for chromosome partition. Involved in negative DNA supercoiling in vivo, and by this means organize and compact chromosomes. May achieve or facilitate chromosome segregation by condensation DNA from both sides of a centrally located replisome during cell division. This is Chromosome partition protein MukB from Sodalis glossinidius (strain morsitans).